The primary structure comprises 78 residues: uncharacterized protein (78 aa).

Positions G51–N78 are disordered.

This is an uncharacterized protein from Dictyostelium discoideum (Social amoeba).